A 286-amino-acid polypeptide reads, in one-letter code: MGSLSSLAAAAVFLSLLAVGHCAAADFNATDADADFAGNGVDFNSSDAAVYWGPWTKARATWYGQPNGAGPDDNGGACGFKHTNQYPFMSMTSCGNQPLFKDGKGCGSCYKIRCTKDQSCSGRSETVIITDMNYYPVAPFHFDLSGTAFGRLAKPGLNDKLRHSGIIDIEFTRVPCEFPGLKIGFHVEEYSNPVYFAVLVEYEDGDGDVVQVDLMESKTAHGPPTGRWTPMRESWGSIWRLDTNHRLQAPFSIRIRNESGKTLVANNVIPANWRPNTFYRSFVQYS.

Positions 1–24 (MGSLSSLAAAAVFLSLLAVGHCAA) are cleaved as a signal peptide. Asparagine 28 and asparagine 44 each carry an N-linked (GlcNAc...) asparagine glycan. Residues 75-181 (GGACGFKHTN…TRVPCEFPGL (107 aa)) form the Expansin-like EG45 domain. 3 disulfide bridges follow: cysteine 78–cysteine 106, cysteine 109–cysteine 176, and cysteine 114–cysteine 120. Residues 194–281 (VYFAVLVEYE…NWRPNTFYRS (88 aa)) form the Expansin-like CBD domain. Residue asparagine 257 is glycosylated (N-linked (GlcNAc...) asparagine).

The protein belongs to the expansin family. Expansin B subfamily. In terms of tissue distribution, expressed in internodes.

It is found in the secreted. It localises to the cell wall. Its subcellular location is the membrane. May cause loosening and extension of plant cell walls by disrupting non-covalent bonding between cellulose microfibrils and matrix glucans. No enzymatic activity has been found. May be required for rapid internodal elongation in deepwater rice during submergence. The chain is Expansin-B4 (EXPB4) from Oryza sativa subsp. japonica (Rice).